The following is a 242-amino-acid chain: Lysosomal membrane ascorbate-dependent ferrireductase CYB561A3 (242 aa).

Over 1 to 7 (MVSGRFY) the chain is Cytoplasmic. Residues 8-28 (LSCLLLGSLGSMCILFTIYWM) form a helical membrane-spanning segment. Residues 12–219 (LLGSLGSMCI…FGLLVLYILL (208 aa)) form the Cytochrome b561 domain. The Lumenal portion of the chain corresponds to 29-45 (QYWRGGFAWNGSIYMFN). N-linked (GlcNAc...) asparagine glycosylation is present at Asn38. The helical transmembrane segment at 46–66 (WHPVLMVAGMVVFYGGASLVY) threads the bilayer. Heme b contacts are provided by His47 and Arg67. At 67–83 (RLPQSWVGPKLPWKLLH) the chain is on the cytoplasmic side. Lys76 and Lys80 together coordinate L-ascorbate. His83 is a binding site for heme b. A helical membrane pass occupies residues 84–104 (AALHLMAFVLTVVGLVAVFTF). Over 105-119 (HNHGRTANLYSLHSW) the chain is Lumenal. Residues 112–115 (NLYS) and His117 each bind heme b. A helical membrane pass occupies residues 120–140 (LGITTVFLFACQWFLGFAVFL). Residues 141-154 (LPWASMWLRSLLKP) lie on the Cytoplasmic side of the membrane. Residue Arg149 participates in L-ascorbate binding. The chain crosses the membrane as a helical span at residues 155–175 (IHVFFGAAILSLSIASVISGI). Heme b contacts are provided by His156 and Glu177. Over 176-202 (NEKLFFSLKNTTRPYHSLPSEAVFANS) the chain is Lumenal. The helical transmembrane segment at 203–223 (TGMLVVAFGLLVLYILLASSW) threads the bilayer. Lys224 is a heme b binding site. Over 224 to 242 (KRPEPGILTDRQPLLHDGE) the chain is Cytoplasmic.

In terms of assembly, homodimer. Heme b serves as cofactor. In terms of processing, N-glycosylated.

It is found in the late endosome membrane. Its subcellular location is the lysosome membrane. The enzyme catalyses Fe(3+)(out) + L-ascorbate(in) = monodehydro-L-ascorbate radical(in) + Fe(2+)(out) + H(+). Transmembrane reductase that uses ascorbate as an electron donor in the cytoplasm and transfers electrons across membranes to reduce iron cations Fe(3+) into Fe(2+) in the lumen of the late endosome and lysosome. Reduced iron can then be extruded from the late endosome and lysosome to the cytoplasm by divalent metal-specific transporters. It is therefore most probably involved in endosomal and lysosomal cellular iron homeostasis. This Homo sapiens (Human) protein is Lysosomal membrane ascorbate-dependent ferrireductase CYB561A3.